The chain runs to 160 residues: Putative pre-16S rRNA nuclease (160 aa).

It belongs to the YqgF nuclease family.

Its subcellular location is the cytoplasm. Functionally, could be a nuclease involved in processing of the 5'-end of pre-16S rRNA. This Rhodopseudomonas palustris (strain ATCC BAA-98 / CGA009) protein is Putative pre-16S rRNA nuclease.